The chain runs to 523 residues: Tyrosine-protein kinase transforming protein Src (523 aa).

The disordered stretch occupies residues 1 to 50 (MGSSKSKPKDPSQRRRSLEPPDSTHHGGFPASQTPNKTAAPDTHRTPSRS). The N-myristoyl glycine; by host moiety is linked to residue Gly-2. The segment covering 7-25 (KPKDPSQRRRSLEPPDSTH) has biased composition (basic and acidic residues). Positions 71 to 139 (TSPQRAGALA…PSNYVAPSDS (69 aa)) constitute an SH3 domain. The SH2 domain occupies 145 to 242 (WYFGKITRRE…GLCHRLTNVC (98 aa)). The Protein kinase domain maps to 264 to 514 (LRLEVKLGQG…TFEYLQAQLL (251 aa)). Residues 270-278 (LGQGYFGEV) and Lys-292 contribute to the ATP site. The active-site Proton acceptor is the Asp-383. Position 413 is a phosphotyrosine; by autocatalysis (Tyr-413).

This sequence belongs to the protein kinase superfamily. Tyr protein kinase family. SRC subfamily. In terms of assembly, homodimer. The phosphorylated form is termed pp60v-src.

The enzyme catalyses L-tyrosyl-[protein] + ATP = O-phospho-L-tyrosyl-[protein] + ADP + H(+). In terms of biological role, this phosphoprotein, required for both the initiation and the maintenance of neoplastic transformation, is a protein kinase that catalyzes the phosphorylation of tyrosine residues in vitro. The chain is Tyrosine-protein kinase transforming protein Src (V-SRC) from Gallus gallus (Chicken).